A 922-amino-acid chain; its full sequence is MSRFFATGSDSESESSLSGDEILPKPVGGTFGKQPIILSDDEEDTKRVVRSAKDKRFEELTNLIKTIRNAMKIRDMTKCLEEFEQLGKAFIKAKNIVDKEGVPRFYIRLLSDLEDYLNELWEDKEGKKKMNKNNAKALSTLRQKLRKYNRDFEAPIAAYKQNPEESADEDQEKDEDSEASSSSDDDSDEGMSASKFLKKADSAPPESRSKFLKKEEAEDEESSSDDEDWGSDSDESDSDESDDENKYTSMASRFLKKTVNEGDRQAAEKKKEEKAKKKQHRKVKRKDEEGEEEEDDNEGGGEWEKVKGGVPLVKEKPKMFAKGTEITPPIVVKKLNEILQARGKKGTDRAAQIDLLHLLAGIAEENNLGQGIAVKIKFNIVASLYDYNTNLATYMKADMWKKCLDSIHDLLDILFANSNMFIGEHISEDSENLSNTDQPLRVRGCILTLIERMDEEFTKIMQNTDPHSQEYVDNLKDEARVCEVIERAQKYLQEKGSTEEVCRVYLRRIMHTYYKFDYKAHQRQLSTGQESKSEQDQAENEAEDSAILMDRLCKYIYAKDRTDRIRTCAILCHIYHHALHNRWFQARDLMLMSHLQDNIQHADPPVQILYNRTMVQLGICAFRQGMIRDAHNALLDIQSSGRAKELLGQGLLMRTMQERNQEQEKIEKRRQIPFHMHINLELLECVYLVSAMLLEIPYMAAHEFDARRRMISKQFHHQLRVGERQPLLGPPESMREHVVAASKAMKMGDWKTCKNFIINEKMNGKVWDLFPEAERVRSMLIRKIQEESLRTYLFTYSSVYDSIRMGILGDMFQLEIPTVHSIISKMIINEELMASLDQPTQTVVMHGTEPSSLQNTALQLAEKLGNLVENNERIFDHKQGSYGGYFNRGDRGDRDQKDQYQRKEGGYMRRGYRRDQQGQSNY.

Disordered regions lie at residues 1–37 (MSRFFATGSDSESESSLSGDEILPKPVGGTFGKQPII) and 154–308 (APIA…KVKG). Residues 8 to 21 (GSDSESESSLSGDE) are compositionally biased toward low complexity. Residues 165–189 (ESADEDQEKDEDSEASSSSDDDSDE) are compositionally biased toward acidic residues. Over residues 207–216 (SRSKFLKKEE) the composition is skewed to basic and acidic residues. Over residues 217-243 (AEDEESSSDDEDWGSDSDESDSDESDD) the composition is skewed to acidic residues. A compositionally biased stretch (basic and acidic residues) spans 258–275 (TVNEGDRQAAEKKKEEKA). Residues 289–301 (EGEEEEDDNEGGG) show a composition bias toward acidic residues. The 177-residue stretch at 674–850 (FHMHINLELL…QTVVMHGTEP (177 aa)) folds into the PCI domain. The interval 885-922 (YFNRGDRGDRDQKDQYQRKEGGYMRRGYRRDQQGQSNY) is disordered. A compositionally biased stretch (basic and acidic residues) spans 888–907 (RGDRGDRDQKDQYQRKEGGY).

The protein belongs to the eIF-3 subunit C family. Component of the eukaryotic translation initiation factor 3 (eIF-3) complex, which is composed of 13 subunits: eif3a, eif3b, eif3c, eif3d, eif3e, eif3f, eif3g, eif3h, eif3i, eif3j, eif3k, eif3l and eif3m.

It is found in the cytoplasm. Component of the eukaryotic translation initiation factor 3 (eIF-3) complex, which is involved in protein synthesis of a specialized repertoire of mRNAs and, together with other initiation factors, stimulates binding of mRNA and methionyl-tRNAi to the 40S ribosome. The eIF-3 complex specifically targets and initiates translation of a subset of mRNAs involved in cell proliferation. This chain is Eukaryotic translation initiation factor 3 subunit C (eif3c), found in Xenopus tropicalis (Western clawed frog).